We begin with the raw amino-acid sequence, 101 residues long: Guanyl-specific ribonuclease Po1 (101 aa).

Residue Q1 is modified to Pyrrolidone carboxylic acid. 3 disulfides stabilise this stretch: C7/C84, C9/C99, and C48/C82. H36 is an active-site residue. The active-site Proton acceptor is the E54. H87 serves as the catalytic Proton donor.

Belongs to the ribonuclease N1/T1 family.

The enzyme catalyses [RNA] containing guanosine + H2O = an [RNA fragment]-3'-guanosine-3'-phosphate + a 5'-hydroxy-ribonucleotide-3'-[RNA fragment].. Its activity is regulated as follows. Inhibited by divalent cations. Inhibition decreases in the order zinc, lead, cadmium, nickel, mercury. This is Guanyl-specific ribonuclease Po1 from Pleurotus ostreatus (Oyster mushroom).